The chain runs to 329 residues: Sorting assembly machinery 35 kDa subunit (329 aa).

In terms of assembly, component of the mitochondrial outer membrane sorting assembly machinery (SAM or TOB) complex, which at least consists of SAM35, SAM37 and SAM50.

It localises to the mitochondrion outer membrane. Essential component of the mitochondrial outer membrane sorting assembly machinery (SAM or TOB) complex, which is required for the sorting of proteins with complicated topology, such as beta-barrel proteins, to the mitochondrial outer membrane after import by the TOM complex. In Saccharomyces cerevisiae (strain ATCC 204508 / S288c) (Baker's yeast), this protein is Sorting assembly machinery 35 kDa subunit (SAM35).